Reading from the N-terminus, the 435-residue chain is Enolase (435 aa).

Q163 provides a ligand contact to (2R)-2-phosphoglycerate. Catalysis depends on E205, which acts as the Proton donor. The Mg(2+) site is built by D243, E292, and D319. Positions 344, 373, 374, and 395 each coordinate (2R)-2-phosphoglycerate. The active-site Proton acceptor is the K344.

It belongs to the enolase family. Mg(2+) serves as cofactor.

The protein localises to the cytoplasm. The protein resides in the secreted. It localises to the cell surface. The enzyme catalyses (2R)-2-phosphoglycerate = phosphoenolpyruvate + H2O. It functions in the pathway carbohydrate degradation; glycolysis; pyruvate from D-glyceraldehyde 3-phosphate: step 4/5. Functionally, catalyzes the reversible conversion of 2-phosphoglycerate (2-PG) into phosphoenolpyruvate (PEP). It is essential for the degradation of carbohydrates via glycolysis. This Streptococcus uberis (strain ATCC BAA-854 / 0140J) protein is Enolase.